The following is a 396-amino-acid chain: Serpin-ZXA (396 aa).

The interval 343 to 367 (GTEAAAATAAVITLRSAPIAEDFVA) is RCL.

This sequence belongs to the serpin family.

Its function is as follows. Probable serine protease inhibitor. The sequence is that of Serpin-ZXA from Oryza sativa subsp. japonica (Rice).